The following is a 426-amino-acid chain: Glutamate-1-semialdehyde 2,1-aminomutase 2 (426 aa).

At K265 the chain carries N6-(pyridoxal phosphate)lysine.

The protein belongs to the class-III pyridoxal-phosphate-dependent aminotransferase family. HemL subfamily. As to quaternary structure, homodimer. It depends on pyridoxal 5'-phosphate as a cofactor.

It localises to the cytoplasm. It catalyses the reaction (S)-4-amino-5-oxopentanoate = 5-aminolevulinate. Its pathway is porphyrin-containing compound metabolism; protoporphyrin-IX biosynthesis; 5-aminolevulinate from L-glutamyl-tRNA(Glu): step 2/2. The sequence is that of Glutamate-1-semialdehyde 2,1-aminomutase 2 from Lachnoclostridium phytofermentans (strain ATCC 700394 / DSM 18823 / ISDg) (Clostridium phytofermentans).